Here is a 716-residue protein sequence, read N- to C-terminus: Polyribonucleotide nucleotidyltransferase (716 aa).

Residues aspartate 490 and aspartate 496 each contribute to the Mg(2+) site. The KH domain maps to 556 to 615 (PKIETLTIPTDKIREVIGSGGKVIREIVETSGAKVDINDDGVIKIASNDQAAIKKAYDMI). Residues 625–693 (GQIYTGKVVK…ERGKVRLGMK (69 aa)) enclose the S1 motif domain. Residues 695 to 716 (VDQETGQEIQPEKKEKEEAGEA) are disordered. The segment covering 704–716 (QPEKKEKEEAGEA) has biased composition (basic and acidic residues).

Belongs to the polyribonucleotide nucleotidyltransferase family. Mg(2+) is required as a cofactor.

The protein localises to the cytoplasm. The catalysed reaction is RNA(n+1) + phosphate = RNA(n) + a ribonucleoside 5'-diphosphate. In terms of biological role, involved in mRNA degradation. Catalyzes the phosphorolysis of single-stranded polyribonucleotides processively in the 3'- to 5'-direction. This Cereibacter sphaeroides (strain ATCC 17029 / ATH 2.4.9) (Rhodobacter sphaeroides) protein is Polyribonucleotide nucleotidyltransferase.